A 312-amino-acid chain; its full sequence is Olfactory receptor-like protein COR2 (312 aa).

Topologically, residues 1-26 are extracellular; it reads MASGNCTTPTTFILSGLTDNPRLQMP. N5 is a glycosylation site (N-linked (GlcNAc...) asparagine). Residues 27–49 form a helical membrane-spanning segment; that stretch reads LFMVFLVIYTTTLLTNLGLIALI. The Cytoplasmic segment spans residues 50–57; sequence GMDLHLQT. Residues 58-79 traverse the membrane as a helical segment; sequence PMYIFLQNLSFTDAAYSTVITP. Topologically, residues 80-100 are extracellular; it reads KMLATFLEERRTISYVGCILQ. C97 and C179 are oxidised to a cystine. A helical transmembrane segment spans residues 101-120; it reads YFSFVLLTTSEWLLLAVMAY. Residues 121 to 139 lie on the Cytoplasmic side of the membrane; it reads DRYVAICKPLLYPSIMTKA. Residues 140–164 traverse the membrane as a helical segment; the sequence is VCWRLVKGLYSLAFLNSLVHTSGLL. Residues 165 to 205 lie on the Extracellular side of the membrane; that stretch reads KLSFCSSNVVNHFFCDNRPLFQISSSSTTLNELLVIISGSL. A helical membrane pass occupies residues 206–226; sequence FVMSSIITILISYVFIILTVV. Topologically, residues 227–239 are cytoplasmic; that stretch reads MIRSKDGKYKAFS. The helical transmembrane segment at 240 to 260 threads the bilayer; it reads TCTSHLMAVSLFHGTVIFMYL. The Extracellular segment spans residues 261–271; sequence RSVKLFSLDTD. The helical transmembrane segment at 272–292 threads the bilayer; the sequence is KIASLFYTVVIPMLNPLIYSW. Topologically, residues 293–312 are cytoplasmic; sequence RNKEVKDALRRLTATSVWLH.

The protein belongs to the G-protein coupled receptor 1 family.

It localises to the cell membrane. In terms of biological role, odorant receptor. This chain is Olfactory receptor-like protein COR2 (COR2), found in Gallus gallus (Chicken).